Reading from the N-terminus, the 841-residue chain is Probable outer membrane protein pmp2 (841 aa).

An N-terminal signal peptide occupies residues 1-24 (MKIPLRFLLISLVPTLSMSNLLGA). The Autotransporter domain occupies 537 to 841 (GAPYEKRFWV…NVDAGSKIKF (305 aa)).

Belongs to the PMP outer membrane protein family.

It is found in the secreted. It localises to the cell wall. Its subcellular location is the cell outer membrane. In Chlamydia pneumoniae (Chlamydophila pneumoniae), this protein is Probable outer membrane protein pmp2 (pmp2).